A 322-amino-acid polypeptide reads, in one-letter code: Protein-methionine-sulfoxide reductase catalytic subunit MsrP (322 aa).

Residues 1–59 (MSLRDALKTPSSEITDEAVYRDRRRLLQLFALTPALSVAGCAEADPPPPPKTVVTPAQA) constitute a signal peptide (tat-type signal). Residues Asn-79, 82–83 (YE), Cys-137, Thr-172, Asn-220, Arg-225, and 236–238 (SIK) contribute to the Mo-molybdopterin site.

The protein belongs to the MsrP family. In terms of assembly, heterodimer of a catalytic subunit (MsrP) and a heme-binding subunit (MsrQ). It depends on Mo-molybdopterin as a cofactor. Post-translationally, predicted to be exported by the Tat system. The position of the signal peptide cleavage has not been experimentally proven.

Its subcellular location is the periplasm. The catalysed reaction is L-methionyl-[protein] + a quinone + H2O = L-methionyl-(S)-S-oxide-[protein] + a quinol. It catalyses the reaction L-methionyl-[protein] + a quinone + H2O = L-methionyl-(R)-S-oxide-[protein] + a quinol. Functionally, part of the MsrPQ system that repairs oxidized periplasmic proteins containing methionine sulfoxide residues (Met-O), using respiratory chain electrons. Thus protects these proteins from oxidative-stress damage caused by reactive species of oxygen and chlorine generated by the host defense mechanisms. MsrPQ is essential for the maintenance of envelope integrity under bleach stress, rescuing a wide series of structurally unrelated periplasmic proteins from methionine oxidation. The catalytic subunit MsrP is non-stereospecific, being able to reduce both (R-) and (S-) diastereoisomers of methionine sulfoxide. This Xanthomonas campestris pv. campestris (strain ATCC 33913 / DSM 3586 / NCPPB 528 / LMG 568 / P 25) protein is Protein-methionine-sulfoxide reductase catalytic subunit MsrP.